The sequence spans 239 residues: Gag polyprotein (239 aa).

Over residues K124–P141 the composition is skewed to basic and acidic residues. Residues K124–M144 form a disordered region. A PPXY motif motif is present at residues P172 to Y175. The disordered stretch occupies residues L184 to A214.

The protein localises to the virion. The protein is Gag polyprotein (ev-1) of Galliformes.